A 212-amino-acid chain; its full sequence is Thymidylate kinase (212 aa).

10-17 provides a ligand contact to ATP; that stretch reads GIDGCGKT.

It belongs to the thymidylate kinase family.

It catalyses the reaction dTMP + ATP = dTDP + ADP. Phosphorylation of dTMP to form dTDP in both de novo and salvage pathways of dTTP synthesis. The chain is Thymidylate kinase from Prochlorococcus marinus (strain AS9601).